Here is a 66-residue protein sequence, read N- to C-terminus: Surface composition regulator (66 aa).

The protein belongs to the GlgS family.

Major determinant of cell surface composition. Negatively regulates motility, adhesion and synthesis of biofilm exopolysaccharides. In Escherichia coli O139:H28 (strain E24377A / ETEC), this protein is Surface composition regulator.